We begin with the raw amino-acid sequence, 462 residues long: ATP synthase subunit beta (462 aa).

152–159 is a binding site for ATP; the sequence is GGAGVGKT.

Belongs to the ATPase alpha/beta chains family. As to quaternary structure, F-type ATPases have 2 components, CF(1) - the catalytic core - and CF(0) - the membrane proton channel. CF(1) has five subunits: alpha(3), beta(3), gamma(1), delta(1), epsilon(1). CF(0) has three main subunits: a(1), b(2) and c(9-12). The alpha and beta chains form an alternating ring which encloses part of the gamma chain. CF(1) is attached to CF(0) by a central stalk formed by the gamma and epsilon chains, while a peripheral stalk is formed by the delta and b chains.

The protein localises to the cell inner membrane. The enzyme catalyses ATP + H2O + 4 H(+)(in) = ADP + phosphate + 5 H(+)(out). In terms of biological role, produces ATP from ADP in the presence of a proton gradient across the membrane. The catalytic sites are hosted primarily by the beta subunits. This is ATP synthase subunit beta from Blochmanniella pennsylvanica (strain BPEN).